The following is a 77-amino-acid chain: Probable small nuclear ribonucleoprotein G (77 aa).

Residues 4–76 (THPPELKKYM…VVIMEPKERI (73 aa)) enclose the Sm domain.

Belongs to the snRNP Sm proteins family. In terms of assembly, core component of the spliceosomal U1, U2, U4 and U5 small nuclear ribonucleoproteins (snRNPs), the building blocks of the spliceosome.

It localises to the cytoplasm. The protein localises to the cytosol. Its subcellular location is the nucleus. Plays a role in pre-mRNA splicing as a core component of the spliceosomal U1, U2, U4 and U5 small nuclear ribonucleoproteins (snRNPs), the building blocks of the spliceosome. The chain is Probable small nuclear ribonucleoprotein G (snr-7) from Caenorhabditis elegans.